An 85-amino-acid chain; its full sequence is Putative membrane protein insertion efficiency factor (85 aa).

The tract at residues 66–85 (PLNSGGDDPVPPKLDDNREH) is disordered.

This sequence belongs to the UPF0161 family.

The protein localises to the cell inner membrane. Its function is as follows. Could be involved in insertion of integral membrane proteins into the membrane. This Yersinia pestis bv. Antiqua (strain Antiqua) protein is Putative membrane protein insertion efficiency factor.